An 832-amino-acid polypeptide reads, in one-letter code: pre-rRNA 2'-O-ribose RNA methyltransferase FTSJ3 (832 aa).

Residues Gly56, Trp58, Asp76, Asp92, and Asp117 each contribute to the S-adenosyl-L-methionine site. Lys157 acts as the Proton acceptor in catalysis. Disordered regions lie at residues 332–358, 485–523, and 546–631; these read INLS…ADEM, RLER…LEEK, and DADE…GLVE. 2 stretches are compositionally biased toward basic and acidic residues: residues 345 to 358 and 485 to 495; these read EEEK…ADEM and RLERERREQGV. Residues 503–514 are compositionally biased toward acidic residues; it reads EEEEEEEEEEEN. The span at 570 to 579 shows a compositional bias: basic residues; it reads KTKKKGQKKK. The segment covering 600 to 618 has biased composition (acidic residues); sequence AEAEAEQSSDDDSSSDEEG. Residues 726-758 are a coiled coil; that stretch reads IKKVAEAKARKKRRMLKKMEQMKKKAEAVVSTV. Positions 795 to 832 are disordered; sequence GPRVRRPPGVKGQFKVVDSRLKKDVRAQKRKEQKKRRK. Over residues 811–821 the composition is skewed to basic and acidic residues; it reads VDSRLKKDVRA. Basic residues predominate over residues 822–832; that stretch reads QKRKEQKKRRK.

It belongs to the class I-like SAM-binding methyltransferase superfamily. RNA methyltransferase RlmE family. SPB1 subfamily. In terms of assembly, interacts with NIP7.

The protein localises to the nucleus. The protein resides in the nucleolus. The catalysed reaction is a ribonucleotide in rRNA + S-adenosyl-L-methionine = a 2'-O-methylribonucleotide in rRNA + S-adenosyl-L-homocysteine + H(+). Its function is as follows. RNA 2'-O-methyltransferase involved in the processing of the 34S pre-rRNA to 18S rRNA and in 40S ribosomal subunit formation. In Gallus gallus (Chicken), this protein is pre-rRNA 2'-O-ribose RNA methyltransferase FTSJ3.